The primary structure comprises 94 residues: Pyrimidine/purine nucleoside phosphorylase (94 aa).

It belongs to the nucleoside phosphorylase PpnP family.

The catalysed reaction is a purine D-ribonucleoside + phosphate = a purine nucleobase + alpha-D-ribose 1-phosphate. The enzyme catalyses adenosine + phosphate = alpha-D-ribose 1-phosphate + adenine. It catalyses the reaction cytidine + phosphate = cytosine + alpha-D-ribose 1-phosphate. It carries out the reaction guanosine + phosphate = alpha-D-ribose 1-phosphate + guanine. The catalysed reaction is inosine + phosphate = alpha-D-ribose 1-phosphate + hypoxanthine. The enzyme catalyses thymidine + phosphate = 2-deoxy-alpha-D-ribose 1-phosphate + thymine. It catalyses the reaction uridine + phosphate = alpha-D-ribose 1-phosphate + uracil. It carries out the reaction xanthosine + phosphate = alpha-D-ribose 1-phosphate + xanthine. In terms of biological role, catalyzes the phosphorolysis of diverse nucleosides, yielding D-ribose 1-phosphate and the respective free bases. Can use uridine, adenosine, guanosine, cytidine, thymidine, inosine and xanthosine as substrates. Also catalyzes the reverse reactions. The polypeptide is Pyrimidine/purine nucleoside phosphorylase (Klebsiella pneumoniae (strain 342)).